A 301-amino-acid polypeptide reads, in one-letter code: Probable alpha-L-glutamate ligase 1 (301 aa).

Residues 104–287 (MQLMSRRGIG…VAGAIIDFVE (184 aa)) form the ATP-grasp domain. ATP is bound by residues Lys-141, 178–179 (EY), Asp-187, and 211–213 (RSN). 3 residues coordinate Mg(2+): Asp-248, Glu-260, and Asn-262. Positions 248, 260, and 262 each coordinate Mn(2+).

Belongs to the RimK family. Requires Mg(2+) as cofactor. The cofactor is Mn(2+).

This is Probable alpha-L-glutamate ligase 1 from Shewanella baltica (strain OS185).